A 780-amino-acid chain; its full sequence is Striatin (780 aa).

The stretch at 53–120 (LHFLQHEWAR…QERAKYHKLK (68 aa)) forms a coiled coil. The caveolin-binding stretch occupies residues 55-63 (FLQHEWARF). The interval 123 to 150 (TELNQGDMKPPSYDSDEGNETEVQPQQN) is disordered. S137 is modified (phosphoserine). The interval 149–166 (QNSQLMWKQGRQLLRQYL) is calmodulin-binding. T225 is modified (phosphothreonine). Phosphoserine occurs at positions 227, 229, 245, and 259. Disordered stretches follow at residues 289–312 (DFLV…DWEK), 334–353 (EQYK…NRSK), and 364–392 (VDEL…ELSR). Positions 299–312 (NESRSAGDGTDWEK) are enriched in basic and acidic residues. Basic residues predominate over residues 338–351 (KERKGKKGVKRPNR). WD repeat units lie at residues 461-500 (SHFD…PAKK), 514-553 (AHKG…VDPY), 567-606 (GHTD…PALS), 662-701 (SSSC…LIHS), 704-743 (AHLE…CIQE), and 750-780 (KFEE…KVFV).

It belongs to the WD repeat striatin family. As to quaternary structure, part of the core of STRIPAK complexes composed of PP2A catalytic and scaffolding subunits, the striatins (PP2A regulatory subunits), the striatin-associated proteins MOB4, STRIP1 and STRIP2, PDCD10 and members of the STE20 kinases, such as STK24 and STK26. Interacts with CTTNBP2; this interaction may regulate dendritic spine distribution of STRN. Activation of glutamate receptors weakens the interaction with CTTNBP2. As to expression, mainly expressed in brain but is also expressed at low levels in various tissues such as kidney, spleen, skeletal muscle and lung.

The protein localises to the cytoplasm. The protein resides in the membrane. Its subcellular location is the cell projection. It is found in the dendritic spine. Calmodulin-binding scaffolding protein which is the center of the striatin-interacting phosphatase and kinase (STRIPAK) complexes. STRIPAK complexes have critical roles in protein (de)phosphorylation and are regulators of multiple signaling pathways including Hippo, MAPK, nuclear receptor and cytoskeleton remodeling. Different types of STRIPAK complexes are involved in a variety of biological processes such as cell growth, differentiation, apoptosis, metabolism and immune regulation. This Mus musculus (Mouse) protein is Striatin (Strn).